A 44-amino-acid chain; its full sequence is M-factor (44 aa).

Residues 1-32 (MDSIATNTHSSSIVNAYNNNPTDVVKTQNIKN) constitute a propeptide that is removed on maturation. Cys41 bears the Cysteine methyl ester mark. Residue Cys41 is the site of S-farnesyl cysteine attachment. Residues 42-44 (VIA) constitute a propeptide, removed in mature form.

The protein localises to the secreted. In terms of biological role, M-factor is a mating pheromone produced by M-type mating cells. All three mfm genes contribute to the production of M-factor. This Schizosaccharomyces pombe (strain 972 / ATCC 24843) (Fission yeast) protein is M-factor (mfm2).